We begin with the raw amino-acid sequence, 103 residues long: Co-chaperonin GroES (103 aa).

Belongs to the GroES chaperonin family. In terms of assembly, heptamer of 7 subunits arranged in a ring. Interacts with the chaperonin GroEL.

The protein localises to the cytoplasm. Functionally, together with the chaperonin GroEL, plays an essential role in assisting protein folding. The GroEL-GroES system forms a nano-cage that allows encapsulation of the non-native substrate proteins and provides a physical environment optimized to promote and accelerate protein folding. GroES binds to the apical surface of the GroEL ring, thereby capping the opening of the GroEL channel. This chain is Co-chaperonin GroES, found in Nostoc sp. (strain PCC 7120 / SAG 25.82 / UTEX 2576).